Here is a 308-residue protein sequence, read N- to C-terminus: Probable very-long-chain enoyl-CoA reductase art-1 (308 aa).

The region spanning 7–85 (VYDAKRTDNL…VLYVRDLGPQ (79 aa)) is the Ubiquitin-like domain. Helical transmembrane passes span 112–132 (FIYG…IAFF), 169–189 (WGFA…PPAF), 194–214 (VYFG…IHIL), and 255–275 (WIFF…TAGF).

It belongs to the steroid 5-alpha reductase family.

Its subcellular location is the endoplasmic reticulum membrane. The enzyme catalyses a very-long-chain 2,3-saturated fatty acyl-CoA + NADP(+) = a very-long-chain (2E)-enoyl-CoA + NADPH + H(+). It functions in the pathway lipid metabolism; fatty acid biosynthesis. In terms of biological role, catalyzes the last of the four reactions of the long-chain fatty acids elongation cycle. This endoplasmic reticulum-bound enzymatic process, allows the addition of 2 carbons to the chain of long- and very long-chain fatty acids/VLCFAs per cycle. This enzyme reduces the trans-2,3-enoyl-CoA fatty acid intermediate to an acyl-CoA that can be further elongated by entering a new cycle of elongation. Thereby, it participates in the production of VLCFAs of different chain lengths that are involved in multiple biological processes as precursors of membrane lipids and lipid mediators. The polypeptide is Probable very-long-chain enoyl-CoA reductase art-1 (art-1) (Caenorhabditis elegans).